The primary structure comprises 102 residues: Large ribosomal subunit protein bL21 (102 aa).

This sequence belongs to the bacterial ribosomal protein bL21 family. In terms of assembly, part of the 50S ribosomal subunit. Contacts protein L20.

Functionally, this protein binds to 23S rRNA in the presence of protein L20. The sequence is that of Large ribosomal subunit protein bL21 from Sorangium cellulosum (strain So ce56) (Polyangium cellulosum (strain So ce56)).